The chain runs to 206 residues: Methylthioribulose-1-phosphate dehydratase (206 aa).

Residues histidine 96 and histidine 98 each contribute to the Zn(2+) site.

Belongs to the aldolase class II family. MtnB subfamily. Requires Zn(2+) as cofactor.

It carries out the reaction 5-(methylsulfanyl)-D-ribulose 1-phosphate = 5-methylsulfanyl-2,3-dioxopentyl phosphate + H2O. It participates in amino-acid biosynthesis; L-methionine biosynthesis via salvage pathway; L-methionine from S-methyl-5-thio-alpha-D-ribose 1-phosphate: step 2/6. In terms of biological role, catalyzes the dehydration of methylthioribulose-1-phosphate (MTRu-1-P) into 2,3-diketo-5-methylthiopentyl-1-phosphate (DK-MTP-1-P). This Exiguobacterium sibiricum (strain DSM 17290 / CCUG 55495 / CIP 109462 / JCM 13490 / 255-15) protein is Methylthioribulose-1-phosphate dehydratase.